Consider the following 496-residue polypeptide: RNA-binding motif protein, Y chromosome, family 1 member A1 (496 aa).

An RRM domain is found at 8–85 (GKLFIGGLNR…KAIKVEQAKK (78 aa)). 2 disordered regions span residues 78 to 349 (IKVE…HRDY) and 452 to 496 (KDQR…SSRY). 2 stretches are compositionally biased toward low complexity: residues 97-114 (PASS…SARG) and 149-159 (PVKRGPSSRSG). Over residues 175–184 (NSWMGSQGPM) the composition is skewed to polar residues. 6 stretches are compositionally biased toward basic and acidic residues: residues 204 to 214 (RNDRMSTRHDG), 242 to 253 (DNGHSNRDEHSS), 276 to 289 (AYRD…DESY), 313 to 326 (GYRD…HESY), 335 to 349 (SSRE…HRDY), and 484 to 496 (GESR…SSRY).

As to quaternary structure, interacts with splicing factor proteins SFRS3/SRP20, TRA2B/SFRS10, KHDRBS1/SAM68 and KHDRBS3. Testis-specific.

Its subcellular location is the nucleus. Functionally, RNA-binding protein involved in pre-mRNA splicing. Required for sperm development. Acts additively with TRA2B to promote exon 7 inclusion of the survival motor neuron SMN. Binds non-specifically to mRNAs. The chain is RNA-binding motif protein, Y chromosome, family 1 member A1 (RBMY1A1) from Homo sapiens (Human).